Consider the following 395-residue polypeptide: Putative 8-amino-7-oxononanoate synthase (395 aa).

Arginine 23 lines the substrate pocket. 110–111 contacts pyridoxal 5'-phosphate; the sequence is GY. Position 135 (histidine 135) interacts with substrate. Pyridoxal 5'-phosphate is bound by residues serine 182, 207–210, and 239–242; these read DEAH and TFSK. Lysine 242 is subject to N6-(pyridoxal phosphate)lysine. Position 356 (threonine 356) interacts with substrate.

Belongs to the class-II pyridoxal-phosphate-dependent aminotransferase family. BioF subfamily. In terms of assembly, homodimer. Requires pyridoxal 5'-phosphate as cofactor.

The catalysed reaction is 6-carboxyhexanoyl-[ACP] + L-alanine + H(+) = (8S)-8-amino-7-oxononanoate + holo-[ACP] + CO2. It participates in cofactor biosynthesis; biotin biosynthesis. Its function is as follows. Catalyzes the decarboxylative condensation of pimeloyl-[acyl-carrier protein] and L-alanine to produce 8-amino-7-oxononanoate (AON), [acyl-carrier protein], and carbon dioxide. This chain is Putative 8-amino-7-oxononanoate synthase (bioF), found in Bacillus mycoides (strain KBAB4) (Bacillus weihenstephanensis).